The chain runs to 607 residues: Coronin-like protein cor-1 (607 aa).

WD repeat units follow at residues alanine 77–asparagine 117, glycine 127–glutamate 167, and glycine 170–glutamate 209. The disordered stretch occupies residues proline 415–valine 564. Over residues glutamine 424–proline 436 the composition is skewed to low complexity. Over residues serine 437–arginine 447 the composition is skewed to pro residues. 2 stretches are compositionally biased toward basic and acidic residues: residues serine 473–lysine 489 and alanine 517–aspartate 533. A compositionally biased stretch (low complexity) spans serine 544 to serine 559. Residues histidine 563–serine 602 adopt a coiled-coil conformation.

Belongs to the WD repeat coronin family.

The protein resides in the cytoplasm. It is found in the cytoskeleton. In terms of biological role, required to direct the migration of Q neuroblasts along the anterior axis of the body during larval development. This is dependent on its asymmetric expression in Q neuroblasts. This chain is Coronin-like protein cor-1 (cor-1), found in Caenorhabditis elegans.